The following is a 502-amino-acid chain: Probable mitochondrial-processing peptidase subunit alpha (502 aa).

It belongs to the peptidase M16 family. In terms of assembly, heterodimer of mas2 (alpha) and mas1 (beta) subunits, forming the mitochondrial processing protease (MPP) in which mas2 is involved in substrate recognition and binding and mas1 is the catalytic subunit.

It is found in the mitochondrion matrix. Functionally, substrate recognition and binding subunit of the essential mitochondrial processing protease (MPP), which cleaves the mitochondrial sequence off newly imported precursors proteins. In Schizosaccharomyces pombe (strain 972 / ATCC 24843) (Fission yeast), this protein is Probable mitochondrial-processing peptidase subunit alpha (mas2).